Here is a 131-residue protein sequence, read N- to C-terminus: L-ectoine synthase (131 aa).

Belongs to the ectoine synthase family.

It catalyses the reaction (2S)-4-acetamido-2-aminobutanoate = L-ectoine + H2O. It participates in amine and polyamine biosynthesis; ectoine biosynthesis; L-ectoine from L-aspartate 4-semialdehyde: step 3/3. Catalyzes the circularization of gamma-N-acetyl-alpha,gamma-diaminobutyric acid (ADABA) to ectoine (1,4,5,6-tetrahydro-2-methyl-4-pyrimidine carboxylic acid), which is an excellent osmoprotectant. The protein is L-ectoine synthase of Nocardia farcinica (strain IFM 10152).